The sequence spans 386 residues: WD repeat-containing protein 89 (386 aa).

6 WD repeats span residues lysine 21–glutamate 65, glycine 68–valine 106, glycine 111–serine 155, threonine 167–alanine 207, asparagine 213–proline 253, and glycine 318–threonine 357.

The polypeptide is WD repeat-containing protein 89 (WDR89) (Bos taurus (Bovine)).